A 105-amino-acid polypeptide reads, in one-letter code: Phosphoribosyl-ATP pyrophosphatase (105 aa).

The protein belongs to the PRA-PH family.

It is found in the cytoplasm. It carries out the reaction 1-(5-phospho-beta-D-ribosyl)-ATP + H2O = 1-(5-phospho-beta-D-ribosyl)-5'-AMP + diphosphate + H(+). It participates in amino-acid biosynthesis; L-histidine biosynthesis; L-histidine from 5-phospho-alpha-D-ribose 1-diphosphate: step 2/9. The polypeptide is Phosphoribosyl-ATP pyrophosphatase (Ruegeria pomeroyi (strain ATCC 700808 / DSM 15171 / DSS-3) (Silicibacter pomeroyi)).